The following is an 826-amino-acid chain: Outer membrane usher protein YehB (826 aa).

Residues Met-1 to Ala-22 form the signal peptide. Cys-809 and Cys-825 form a disulfide bridge.

This sequence belongs to the fimbrial export usher family.

Its subcellular location is the cell outer membrane. Its function is as follows. Part of the yehABCD fimbrial operon. Could contribute to adhesion to various surfaces in specific environmental niches. Probably involved in the export and assembly of fimbrial subunits across the outer membrane. This chain is Outer membrane usher protein YehB (yehB), found in Escherichia coli (strain K12).